The following is a 422-amino-acid chain: Steroid hormone receptor ERR1 (422 aa).

Residues 1–67 (MSSQVVGIEP…GAGPGEQGGG (67 aa)) are disordered. Phosphoserine is present on residues Ser-19 and Ser-22. The segment covering 58–67 (GAGPGEQGGG) has biased composition (gly residues). The nuclear receptor DNA-binding region spans 76–151 (KRLCLVCGDV…VGMLKEGVRL (76 aa)). NR C4-type zinc fingers lie at residues 79–99 (CLVC…CEAC) and 115–134 (CPAS…CQAC). 4 positions are modified to N6-acetyllysine; by PCAF/KAT2B: Lys-129, Lys-138, Lys-160, and Lys-162. Glycyl lysine isopeptide (Lys-Gly) (interchain with G-Cter in SUMO2) cross-links involve residues Lys-189 and Lys-402. Residues 192-420 (PVNALVSHLL…KLFLEMLEAM (229 aa)) form the NR LBD domain.

This sequence belongs to the nuclear hormone receptor family. NR3 subfamily. In terms of assembly, binds DNA as a monomer or a homodimer. Interacts (via the AF2 domain) with coactivator PPARGC1A (via the L3 motif); the interaction greatly enhances transcriptional activity of genes involved in energy metabolism. Interacts with PIAS4; the interaction enhances sumoylation. Interacts with MAPK15; promotes re-localization of ESRRA to the cytoplasm through a XPO1-dependent mechanism then inhibits ESRRA transcriptional activity. In terms of processing, phosphorylation on Ser-19 enhances sumoylation on Lys-14 increasing repression of transcriptional activity. Post-translationally, sumoylated with SUMO2. Main site is Lys-14 which is enhanced by phosphorylation on Ser-19, cofactor activation, and by interaction with PIAS4. Sumoylation enhances repression of transcriptional activity, but has no effect on subcellular location nor on DNA binding. Reversibly acetylated. Acetylation by PCAF/KAT2 at Lys-129, Lys-138, Lys-160 and Lys-162 and PCAF/KAT2 decreases transcriptional activity probably by inhibiting DNA-binding activity; deacetylation involves SIRT1 and HDAC8 and increases DNA-binding.

It localises to the nucleus. The protein localises to the cytoplasm. Functionally, binds to an ERR-alpha response element (ERRE) containing a single consensus half-site, 5'-TNAAGGTCA-3'. Can bind to the medium-chain acyl coenzyme A dehydrogenase (MCAD) response element NRRE-1 and may act as an important regulator of MCAD promoter. May function as a modulator of the estrogen signaling pathway in the uterus. Induces the expression of PERM1 in the skeletal muscle. In Canis lupus familiaris (Dog), this protein is Steroid hormone receptor ERR1 (ESRRA).